Here is a 116-residue protein sequence, read N- to C-terminus: UPF0127 protein PF1050 (116 aa).

This sequence belongs to the UPF0127 family.

The chain is UPF0127 protein PF1050 from Pyrococcus furiosus (strain ATCC 43587 / DSM 3638 / JCM 8422 / Vc1).